A 184-amino-acid polypeptide reads, in one-letter code: PRKR-interacting protein 1 (184 aa).

Residues 1–10 (MASPAASSVR) show a composition bias toward low complexity. 3 disordered regions span residues 1–20 (MASP…EPQT), 37–76 (RLMK…GAGS), and 120–184 (AEEQ…TMGR). Residues 1–50 (MASPAASSVRPPRPKKEPQTLVIPKNAAEEQKLKLERLMKNPDKAVPIPE) are interaction with EIF2AK2. Residues 51 to 143 (KMSEWAPRPP…LKEKKLLAKK (93 aa)) are required for RNA-binding. Residues 91 to 152 (QRQDYMDAMA…KMKLEQKKQE (62 aa)) are a coiled coil. The required for nuclear localization stretch occupies residues 126–138 (KRRKKRQKLKEKK). Basic residues predominate over residues 126-143 (KRRKKRQKLKEKKLLAKK). Residues 159–169 (EQGSSSSAEAS) are compositionally biased toward low complexity.

The protein belongs to the PRKRIP1 family. In terms of assembly, component of the pre-catalytic and post-catalytic spliceosome complexes. Interacts with EIF2AK2.

It is found in the nucleus. The protein localises to the nucleolus. Functionally, required for pre-mRNA splicing as component of the spliceosome. Binds double-stranded RNA. Inhibits EIF2AK2 kinase activity. The chain is PRKR-interacting protein 1 (PRKRIP1) from Pongo abelii (Sumatran orangutan).